The primary structure comprises 232 residues: MPRFEAQKSSMVPYHIRQYQDSDHKRVVDVFTTGAEEYIPSTFRHVLRLPRTFLLLLGVPLALVLVSGSWILAVICIFFLLLLLRLLARQPWKEYVAKCLQTYMVDITKSYLNVHGACFWVAESGGQVVGIVAAQPVKDPPLGRKQLQLFRLSVSSQHRGQGIAKALTRTVLQFARDQSYSDVVLETSTLQQGAMTLYLGMGFKKTGQYFKSMFWRLVDICFIQLNYSFPSA.

At 1 to 62 the chain is on the cytoplasmic side; sequence MPRFEAQKSS…FLLLLGVPLA (62 aa). A helical; Signal-anchor for type II membrane protein transmembrane segment spans residues 63–83; it reads LVLVSGSWILAVICIFFLLLL. The region spanning 79–224 is the N-acetyltransferase domain; it reads FLLLLLRLLA…WRLVDICFIQ (146 aa). Residues 84–232 lie on the Lumenal side of the membrane; that stretch reads LRLLARQPWK…IQLNYSFPSA (149 aa). Residue lysine 109 is modified to N6-acetyllysine.

The protein belongs to the NAT8 family. Acetylation on Lys-109 modulates enzymatic activity. In terms of tissue distribution, expressed in brain (at protein level).

It localises to the endoplasmic reticulum-Golgi intermediate compartment membrane. Its subcellular location is the endoplasmic reticulum membrane. It carries out the reaction L-lysyl-[protein] + acetyl-CoA = N(6)-acetyl-L-lysyl-[protein] + CoA + H(+). Its function is as follows. Endoplasmic reticulum (ER)-membrane-bound lysine N-acetyltransferase catalyzing the N6-acetylation of lysine residues in the lumen of the ER in various proteins, including PROM1 and BACE1, using acetyl-CoA as acetyl donor. Thereby, may regulate apoptosis through the acetylation and the regulation of the expression of PROM1. Acetylates and stabilizes BACE1 immature protein, leading to increased steady-state levels in neurons. By acting on BACE1 expression, may regulate amyloid beta-peptide formation. N(6)-lysine acetylation in ER maintains protein homeostasis and regulates reticulophagy. In Mus musculus (Mouse), this protein is N-acetyltransferase 8B.